Reading from the N-terminus, the 3021-residue chain is MSTLPKPQRKTKRNTIRRPQDVKFPGGGVIYVGVYVLPRRGPRLGVRATRKTSERSQPRGRRKPIPKARRSEGRSWAQPGYPWPLYGNEGCGWAGWLLSPRGSRPNWAPNDPRRRSRNLGKVIDTLTCGFADLMGYIPLVGAPLGGAARALAHGVRALEDGINFATGNLPGCSFSIFLLALFSCLIHPAASLEWRNTSGLYVLTNDCSNSSIVYEADDVILHTPGCIPCVQDGNTSTCWTPVTPTVAVRYVGATTASIRSHVDLLVGAGTMCSALYVGDMCGPVFLVGQAFTFRPRRHRTVQTCNCSLYPGHLSGQRMAWDMMMNWSPAVGMVVAHILRLPQTLFDVVAGAHWGIIAGLAYYSMQGNWAKVAIIMVMFSGVDASTHVTAGQAARNAYGITSLFSVGAKQNLQLINTNGSWHINRTALNCNESINTGFIAGLFYYHKFNSTGCPQRLSSCKPITFFKQGWGPLTDANITGPSDDKPYCWHYAPRPCGIVPALNVCGPVYCFTPSPVVVGTTDAKGAPTYTWGANKTDVFLLESLRPPSGRWFGCTWMNSTGFVKTCGAPPCNIYGDGRDAQNESDLFCPTDCFRKHPEATYSRCGAGPWLTPRCLVDYPYRLWHYPCTVNFTLFKVRMFVGGFEHRFTAACNWTRGERCDIEDRDRSEQHPLLHSTTELAILPCSFTPMPALSTGLIHLHQNIVDVQYLYGIGSGMVGWALKWEFVILIFLLLADARVCVALWLILTISQAEAALENLVTLNAVAAAGTHGIGWYLVAFCAAWYVRGKLVPLVTYSLTGLWSLALLVLLLPQRAYAWSGEDSATLGAGILVLFGFFTLSPWYKHWIARLIWWNQYTICRCESALHVWVPPLLARGGRDGVILLTSLLYPSLIFDITKLLIAALGPLYLIQATITATPYFVRAHVLVRLCMLVRSVMGGKYFQMIILSLADGSNTYLYDHLAPMQHWAAAGLKDLAVATEPVIFSPMEIKVITWGADTAACGDILCGLPVSARLGREVLLGPADDYREMGWRLLAPITAYAQQTRGLLGTIVTSLTGRDKNVVAGEVQVLSTATQTFLGTTVGGVMWTVYHGAGSRTLAGVKHPALQMYTNVDQDLVGWPAPPGAKSLEPCTCGSADLYLVTRDADVIPARRRGDSTASLLSPRPLARLKGSSGGPVMCPSGHVAGIFRAAVCTRGVAKALQFIPVETLSTQARSPSFSDNSTPPAVPQSYQVGYLHAPTGSGKSTKVPAAYVAQGYNVLVLNPSVAATLGFGSFMSRAYGIDPNIRTGNRTVTTGAKLTYSTYGKFLAGGGCSGGAYDVIICDDCHAQDATSILGIGTVLDQAETAGVRLTVLATATPPGSITVPHSNIEEVALGSEGEIPFYGKAIPIACIKGGRHLIFCHSKKKCDKMASKLRGMGLNAVAYYRGLDVSVIPTTGDVVVCATDALMTGFTGDFDSVIDCNVAVEQYVDFSLDPTFSIETCTAPQDAVSRSQRRGRTGRGRLGTYRYVTPGERPSGMFDSVVLCECYDAGCSWYDLQPAETTVRLRAYLSTPGLPVCQDHLDLWESVFTGLTHIDAHFLSQTKQAGLNFSYLTAYQATVCARAQAPPPSWDETWKCLVRLKPTLHGPTPLLYRLGPVQNEICLTHPITKYVMACMSADLEVTTSTWVLLGGVLAAVAAYCLSVGCVVIVGHIELGGKPALVPDKEVLYQQYDEMEECSQARPYIEQAQVIAHQFKEKVLGLLQRATQQQAVIEPIVVSNWQKLEVLWHKHMWNFVSGIQYLAGLSTLPGNPAVASLMAFTASVTSPLTTNQTMFFNILGGWVATHLAGPQASSAFVVSGLAGAAIGGIGLGRVLLDILAGYGAGVSGALVAFKIMGGEPPTTEDMVNLLPAILSPGALVVGVICAAILRRHVGPGEGPVQWMNRLIAFASRGNHVSPAHYVPESDAAARVTALLSSLTVTSLLRRLHQWINEDYPSPCSGDWLRIIWDWVCSVVSDFKTWLSAKIMPALPGLPFISCQKGYKGVWRGDGVMSTRCPCGASIAGHVKNGSMRLAGPRTCANMCHGTFPINEYTTGPSTPCPPPNYTRALWRVAANSYVEVRRVGDFHYITGATEDGLKCPCQVPATEFFTEVDGVRIHRYAPPCRPLLRDEITFMVGLNSYAIGSQLPCEPEPDVSVLTSMLRDPSHITAETAARRLARGSPPSEASSSASQLSAPSLKATCQTHRPHPDAELVDANLLWRQEMGSNITRVESETKVVILDSFEPLRAETDDAELSAAAECFKKPPKYPPALPIWARPDYNPPLLDRWKSPDYVPPTVHGCALPPKGAPPVPPPRRKRTIQLDGSNVSAALAALAEKSFPSSKPQEENSSSSGVDTQSSTASKVLPSPGEESDSESCSSMPPLEGEPGDPDLSCDSWSTVSDSEEQSVVCCSMSYSWTGALITPCSAEEEKLPISPLSNSLLRHHNLVYSTSSRSASQRQKKVTFDRLQVLDDHYKTALQEVKERASRVKARMLSIEEACALVPPHSARSKFGYSAKDVRSLSSKAINQIRSVWEDLLEDTTTPIPTTIMAKNEVFCVDPAKGGRKAARLIVYPDLGVRVCEKRALYDVIQRLSIETMGSAYGFQYSPRQRVERLLKMWTSKKTPLGFSYDTRCFDSTVTGQDIRVEEAVYQCCNLEPEPGQAISSLTERLYCGGPMNNSKGAQCGYLRCRASGVLPTSFGNTITCYIKATAAARAAGLRNPDFLVCGDDLVVVAESDGVDEDRATLRAFTEAMTRYSAPPGDAPQPTYDLELITSCSSNVSVARDDKGKRYYYLTRDATTPLARAAWETARHTPVNSWLGSIIMYAPTIWVRMVMMTHFFSILQSQEILDRPLDFEMYGATYSVTPLDLPAIIERLHGLSAFSVHSYSPVELNRVAGTLRKLGCPPLRAWRHRARAVRAKLIAQGGRAKICGLYLFNWAVRTKTKLTPLPAAGQLDLSSWFTVGVGGNDIYHSVSRARTRYLLLCLLLLTVGVGIFLLPAR.

Position 2 is an N-acetylserine; by host (Ser2). Residues 2–23 (STLPKPQRKTKRNTIRRPQDVK) are interaction with STAT1. The interval 2-58 (STLPKPQRKTKRNTIRRPQDVKFPGGGVIYVGVYVLPRRGPRLGVRATRKTSERSQP) is interaction with EIF2AK2/PKR. Positions 2–59 (STLPKPQRKTKRNTIRRPQDVKFPGGGVIYVGVYVLPRRGPRLGVRATRKTSERSQPR) are interaction with DDX3X. The disordered stretch occupies residues 2–75 (STLPKPQRKT…PKARRSEGRS (74 aa)). Residues 2 to 168 (STLPKPQRKT…EDGINFATGN (167 aa)) lie on the Cytoplasmic side of the membrane. 2 short sequence motifs (nuclear localization signal) span residues 5-13 (PKPQRKTKR) and 38-43 (PRRGPR). Over residues 7–16 (PQRKTKRNTI) the composition is skewed to basic residues. At Ser53 the chain carries Phosphoserine; by host. 2 short sequence motifs (nuclear localization signal) span residues 58–64 (PRGRRKP) and 66–71 (PKARRS). The span at 58-68 (PRGRRKPIPKA) shows a compositional bias: basic residues. Phosphoserine; by host is present on residues Ser99 and Ser116. An important for endoplasmic reticulum and mitochondrial localization region spans residues 112–152 (PRRRSRNLGKVIDTLTCGFADLMGYIPLVGAPLGGAARALA). An interaction with APOA2 region spans residues 122–173 (VIDTLTCGFADLMGYIPLVGAPLGGAARALAHGVRALEDGINFATGNLPGCS). The tract at residues 164–167 (FATG) is important for lipid droplets localization. Residues 169-189 (LPGCSFSIFLLALFSCLIHPA) traverse the membrane as a helical segment. Residues 178 to 191 (LLALFSCLIHPAAS) constitute a propeptide, ER anchor for the core protein, removed in mature form by host signal peptidase. Residues 190 to 358 (ASLEWRNTSG…AGAHWGIIAG (169 aa)) are Lumenal-facing. 3 N-linked (GlcNAc...) asparagine; by host glycosylation sites follow: Asn196, Asn209, and Asn234. The segment at 265-296 (LVGAGTMCSALYVGDMCGPVFLVGQAFTFRPR) is important for fusion. The N-linked (GlcNAc...) asparagine; by host glycan is linked to Asn305. The chain crosses the membrane as a helical span at residues 359–379 (LAYYSMQGNWAKVAIIMVMFS). Residues 380-731 (GVDASTHVTA…WEFVILIFLL (352 aa)) lie on the Lumenal side of the membrane. The interval 385 to 412 (THVTAGQAARNAYGITSLFSVGAKQNLQ) is HVR1. Asn417, Asn423, and Asn430 each carry an N-linked (GlcNAc...) (high mannose) asparagine; by host glycan. 4 cysteine pairs are disulfide-bonded: Cys429/Cys553, Cys452/Cys459, Cys487/Cys495, and Cys504/Cys509. The N-linked (GlcNAc...) asparagine; by host glycan is linked to Asn448. The HVR2 stretch occupies residues 475–479 (ANITG). Asn476 is a glycosylation site (N-linked (GlcNAc...) asparagine; by host). Residues 481-494 (SDDKPYCWHYAPRP) form a CD81-binding 1 region. Asn533 carries an N-linked (GlcNAc...) asparagine; by host glycan. The interval 545-552 (PPSGRWFG) is CD81-binding 2. Asn557 is a glycosylation site (N-linked (GlcNAc...) asparagine; by host). 4 disulfide bridges follow: Cys565–Cys570, Cys587–Cys591, Cys603–Cys626, and Cys613–Cys650. N-linked (GlcNAc...) (high mannose) asparagine; by host glycosylation is found at Asn629 and Asn651. Cys658 and Cys683 are oxidised to a cystine. Positions 666 to 677 (SEQHPLLHSTTE) are PKR/eIF2-alpha phosphorylation homology domain (PePHD). A helical transmembrane segment spans residues 732–752 (LADARVCVALWLILTISQAEA). The Lumenal segment spans residues 753–763 (ALENLVTLNAV). A helical membrane pass occupies residues 764-784 (AAAGTHGIGWYLVAFCAAWYV). The Cytoplasmic segment spans residues 785 to 787 (RGK). The helical transmembrane segment at 788–809 (LVPLVTYSLTGLWSLALLVLLL) threads the bilayer. Topologically, residues 810 to 819 (PQRAYAWSGE) are lumenal. Residues 820–840 (DSATLGAGILVLFGFFTLSPW) form a helical membrane-spanning segment. The Cytoplasmic portion of the chain corresponds to 841 to 844 (YKHW). The chain crosses the membrane as a helical span at residues 845 to 864 (IARLIWWNQYTICRCESALH). Over 865–887 (VWVPPLLARGGRDGVILLTSLLY) the chain is Lumenal. A helical membrane pass occupies residues 888–908 (PSLIFDITKLLIAALGPLYLI). One can recognise a Peptidase C18 domain in the interval 905 to 1032 (LYLIQATITA…DYREMGWRLL (128 aa)). The Cytoplasmic segment spans residues 909 to 1663 (QATITATPYF…CMSADLEVTT (755 aa)). Residues 910–1212 (ATITATPYFV…PVETLSTQAR (303 aa)) form a protease NS2-3 region. A lipid anchor (S-palmitoyl cysteine; by host) is attached at Cys928. An interaction with host SCPS1 region spans residues 935–955 (MGGKYFQMIILSLADGSNTYL). Residues His958, Glu978, and Cys999 each act as for protease NS2 activity; shared with dimeric partner in the active site. In terms of domain architecture, Peptidase S29 spans 1033-1214 (APITAYAQQT…ETLSTQARSP (182 aa)). Active-site charge relay system; for serine protease NS3 activity residues include His1089 and Asp1113. Residues Cys1129 and Cys1131 each coordinate Zn(2+). Ser1171 acts as the Charge relay system; for serine protease NS3 activity in catalysis. Residues Cys1177 and His1181 each coordinate Zn(2+). The Helicase ATP-binding domain occupies 1223 to 1375 (PAVPQSYQVG…SNIEEVALGS (153 aa)). 1236-1243 (APTGSGKS) contacts ATP. Residue Ser1243 participates in Mg(2+) binding. Positions 1322–1325 (DDCH) match the DECH box motif. Residues 1382–1544 (YGKAIPIACI…DLQPAETTVR (163 aa)) enclose the Helicase C-terminal domain. The segment at 1492–1504 (QRRGRTGRGRLGT) is RNA-binding. Residues 1664-1684 (STWVLLGGVLAAVAAYCLSVG) traverse the membrane as a helical segment. The segment at 1685–1696 (CVVIVGHIELGG) is NS3-binding. Residues 1685-1811 (CVVIVGHIEL…SVTSPLTTNQ (127 aa)) lie on the Cytoplasmic side of the membrane. The helical transmembrane segment at 1812–1830 (TMFFNILGGWVATHLAGPQ) threads the bilayer. Residues 1831-1834 (ASSA) lie on the Lumenal side of the membrane. A helical transmembrane segment spans residues 1835–1855 (FVVSGLAGAAIGGIGLGRVLL). Position 1856 (Asp1856) is a topological domain, cytoplasmic. A helical membrane pass occupies residues 1857–1877 (ILAGYGAGVSGALVAFKIMGG). The Lumenal portion of the chain corresponds to 1878-1887 (EPPTTEDMVN). Residues 1888–1908 (LLPAILSPGALVVGVICAAIL) form a helical membrane-spanning segment. The Cytoplasmic portion of the chain corresponds to 1909-1978 (RRHVGPGEGP…WINEDYPSPC (70 aa)). Cys1978 is lipidated: S-palmitoyl cysteine; by host. The stretch at 1979–2008 (SGDWLRIIWDWVCSVVSDFKTWLSAKIMPA) is an intramembrane region. Residues 2009 to 3000 (LPGLPFISCQ…YHSVSRARTR (992 aa)) are Cytoplasmic-facing. Positions 2017, 2035, 2037, and 2058 each coordinate Zn(2+). The segment at 2126-2214 (EFFTEVDGVR…ASSSASQLSA (89 aa)) is FKBP8-binding. Residues 2126-2338 (EFFTEVDGVR…PVPPPRRKRT (213 aa)) are transcriptional activation. The segment at 2141–2145 (PPCRP) is interaction with non-structural protein 4A. Residues 2193–2215 (ARRLARGSPPSEASSSASQLSAP) are disordered. Residues 2195–2448 (RLARGSPPSE…ALITPCSAEE (254 aa)) form an interaction with host SKP2 region. Residues Ser2200, Ser2203, Ser2207, Ser2210, Ser2213, and Ser2216 each carry the phosphoserine; by host modification. Residues 2200–2215 (SPPSEASSSASQLSAP) show a composition bias toward low complexity. Residues 2216 to 2255 (SLKATCQTHRPHPDAELVDANLLWRQEMGSNITRVESETK) form an ISDR region. The segment at 2216 to 2281 (SLKATCQTHR…AELSAAAECF (66 aa)) is interaction with EIF2AK2/PKR. Residues 2255-2312 (KVVILDSFEPLRAETDDAELSAAAECFKKPPKYPPALPIWARPDYNPPLLDRWKSPDY) form an NS4B-binding region. The interval 2305-2383 (DRWKSPDYVP…DTQSSTASKV (79 aa)) is V3. Disordered regions lie at residues 2318–2338 (HGCA…RKRT) and 2356–2419 (KSFP…WSTV). The SH3-binding motif lies at 2328–2331 (PPVP). The Nuclear localization signal signature appears at 2333–2341 (PRRKRTIQL). Residue Lys2356 forms a Glycyl lysine isopeptide (Lys-Gly) (interchain with G-Cter in ubiquitin) linkage. The span at 2359 to 2381 (PSSKPQEENSSSSGVDTQSSTAS) shows a compositional bias: low complexity. Residues Ser2459 and Ser2472 each carry the phosphoserine; by host modification. The RdRp catalytic domain occupies 2644–2762 (PLGFSYDTRC…VAESDGVDED (119 aa)). Residues Asp2650, Asp2748, and Asp2749 each contribute to the Mg(2+) site. The chain crosses the membrane as a helical span at residues 3001-3021 (YLLLCLLLLTVGVGIFLLPAR).

This sequence belongs to the hepacivirus polyprotein family. In terms of assembly, homooligomer. Interacts with E1 (via C-terminus). Interacts with the non-structural protein 5A. Interacts (via N-terminus) with host STAT1 (via SH2 domain); this interaction results in decreased STAT1 phosphorylation and ubiquitin-mediated proteasome-dependent STAT1 degradation, leading to decreased IFN-stimulated gene transcription. Interacts with host STAT3; this interaction constitutively activates STAT3. Interacts with host LTBR receptor. Interacts with host TNFRSF1A receptor and possibly induces apoptosis. Interacts with host HNRPK. Interacts with host YWHAE. Interacts with host UBE3A/E6AP. Interacts with host DDX3X. Interacts with host APOA2. Interacts with host RXRA protein. Interacts with host SP110 isoform 3/Sp110b; this interaction sequesters the transcriptional corepressor SP110 away from the nucleus. Interacts with host CREB3 nuclear transcription protein; this interaction triggers cell transformation. Interacts with host ACY3. Interacts with host C1QR1. Interacts with host RBM24; this interaction, which enhances the interaction of the mature core protein with 5'-UTR, may inhibit viral translation and favor replication. Interacts with host EIF2AK2/PKR; this interaction induces the autophosphorylation of EIF2AK2. Part of the viral assembly initiation complex composed of NS2, E1, E2, NS3, NS4A, NS5A and the mature core protein. As to quaternary structure, forms a heterodimer with envelope glycoprotein E2. Interacts with mature core protein. Interacts with protease NS2. The heterodimer E1/E2 interacts with host CLDN1; this interaction plays a role in viral entry into host cell. Interacts with host SPSB2 (via C-terminus). Part of the viral assembly initiation complex composed of NS2, E1, E2, NS3, NS4A, NS5A and the mature core protein. Interacts with host NEURL3; this interaction prevents E1 binding to glycoprotein E2. Forms a heterodimer with envelope glycoprotein E1. Interacts with host CD81 and SCARB1 receptors; these interactions play a role in viral entry into host cell. Interacts with host EIF2AK2/PKR; this interaction inhibits EIF2AK2 and probably allows the virus to evade the innate immune response. Interacts with host CD209/DC-SIGN and CLEC4M/DC-SIGNR. Interact with host SPCS1; this interaction is essential for viral particle assembly. Interacts with protease NS2. The heterodimer E1/E2 interacts with host CLDN1; this interaction plays a role in viral entry into host cell. Part of the viral assembly initiation complex composed of NS2, E1, E2, NS3, NS4A, NS5A and the mature core protein. Interacts with host SLC3A2/4F2hc; the interaction may facilitate viral entry into host cell. Interacts with human PLSCR1. In terms of assembly, homohexamer. Homoheptamer. Interacts with protease NS2. As to quaternary structure, homodimer. Interacts with host SPCS1; this interaction is essential for viral particle assembly. Interacts with envelope glycoprotein E1. Interacts with envelope glycoprotein E2. Interacts with viroporin p7. Interacts with serine protease/helicase NS3. Part of the replication complex composed of NS2, NS3, NS4A, NS4B, NS5A and the RNA-directed RNA polymerase embedded in an ER-derived membranous web. Part of the viral assembly initiation complex composed of NS2, E1, E2, NS3, NS4A, NS5A and the mature core protein. Interacts with protease NS2. Interacts with non-structural protein 4A; this interaction stabilizes the folding of NS3 serine protease. NS3-NS4A interaction is essential for NS3 activation and allows membrane anchorage of the latter. NS3/NS4A complex also prevents phosphorylation of host IRF3, thus preventing the establishment of dsRNA induced antiviral state. Interacts with host MAVS; this interaction leads to the cleavage and inhibition of host MAVS. Interacts with host TICAM1; this interaction leads to the cleavage and inhibition of host TICAM1. Interacts with host TANK-binding kinase/TBK1; this interaction results in the inhibition of the association between TBK1 and IRF3, which leads to the inhibition of IRF3 activation. Interacts with host RBM24. Part of the replication complex composed of NS2, NS3, NS4A, NS4B, NS5A and the RNA-directed RNA polymerase embedded in an ER-derived membranous web. Part of the viral assembly initiation complex composed of NS2, E1, E2, NS3, NS4A, NS5A and the mature core protein. In terms of assembly, interacts with NS3 serine protease; this interaction stabilizes the folding of NS3 serine protease. NS3-NS4A interaction is essential for NS3 activation and allows membrane anchorage of the latter. Interacts with non-structural protein 5A (via N-terminus). Part of the replication complex composed of NS2, NS3, NS4A, NS4B, NS5A and the RNA-directed RNA polymerase embedded in an ER-derived membranous web. Part of the viral assembly initiation complex composed of NS2, E1, E2, NS3, NS4A, NS5A and the mature core protein. As to quaternary structure, homomultimer. Interacts with non-structural protein NS5A. Interacts with host PLA2G4C; this interaction likely initiates the recruitment of replication complexes to lipid droplets. Interacts with host STING; this interaction disrupts the interaction between STING and TBK1 thereby suppressing the interferon signaling. Part of the replication complex composed of NS2, NS3, NS4A, NS4B, NS5A and the RNA-directed RNA polymerase embedded in an ER-derived membranous web. Monomer. Homodimer; dimerization is required for RNA-binding. Interacts with the mature core protein. Interacts (via N-terminus) with non-structural protein 4A. Interacts with non-structural protein 4B. Interacts (via region D2) with RNA-directed RNA polymerase. Part of the viral assembly initiation complex composed of NS2, E1, E2, NS3, NS4A, NS5A and the mature core protein. Part of the replication complex composed of NS2, NS3, NS4A, NS4B, NS5A and the RNA-directed RNA polymerase embedded in an ER-derived membranous web. Interacts with host GRB2. Interacts with host BIN1. Interacts with host PIK3R1. Interacts with host SRCAP. Interacts with host FKBP8. Interacts (via C-terminus) with host VAPB (via MSP domain). Interacts with host EIF2AK2/PKR; this interaction leads to disruption of EIF2AK2 dimerization by NS5A and probably allows the virus to evade the innate immune response. Interacts (via N-terminus) with host PACSIN2 (via N-terminus); this interaction attenuates protein kinase C alpha-mediated phosphorylation of PACSIN2 by disrupting the interaction between PACSIN2 and PRKCA. Interacts (via N-terminus) with host SRC kinase (via SH2 domain). Interacts with most Src-family kinases. Interacts with host IFI27 and SKP2; promotes the ubiquitin-mediated proteasomal degradation of NS5A. Interacts with host GPS2. Interacts with host TNFRSF21; this interaction allows the modulation by the virus of JNK, p38 MAPK, STAT3, and Akt signaling pathways in a DR6-dependent manner. Interacts (via N-terminus) with host CIDEB (via N-terminus); this interaction seems to regulate the association of HCV particles with APOE. Interacts with host CHKA/Choline Kinase-alpha; CHKA bridges host PI4KA and NS5A and potentiates NS5A-stimulated PI4KA activity, which then facilitates the targeting of the ternary complex to the ER for viral replication. Interacts with host SPSB2 (via C-terminus); this interaction targets NS5A for ubiquitination and degradation. Interacts with host RAB18; this interaction may promote the association of NS5A and other replicase components with lipid droplets. Interacts (via region D2) with host PPIA/CYPA; the interaction stimulates RNA-binding ability of NS5A and is dependent on the peptidyl-prolyl cis-trans isomerase activity of PPIA/CYPA. Interacts with host TRIM14; this interaction induces the degradation of NS5A. In terms of assembly, homooligomer. Interacts with non-structural protein 5A. Interacts with host VAPB. Interacts with host PRK2/PKN2. Interacts with host HNRNPA1 and SEPT6; these interactions facilitate viral replication. Part of the replication complex composed of NS2, NS3, NS4A, NS4B, NS5A and the RNA-directed RNA polymerase. It depends on Zn(2+) as a cofactor. Mg(2+) serves as cofactor. Post-translationally, specific enzymatic cleavages in vivo yield mature proteins. The structural proteins, core, E1, E2 and p7 are produced by proteolytic processing by host signal peptidases. The core protein precursor is synthesized as a 23 kDa, which is retained in the ER membrane through the hydrophobic signal peptide. Cleavage by the signal peptidase releases the 21 kDa mature core protein. The cleavage of the core protein precursor occurs between aminoacids 176 and 188 but the exact cleavage site is not known. Some degraded forms of the core protein appear as well during the course of infection. The other proteins (p7, NS2, NS3, NS4A, NS4B, NS5A and NS5B) are cleaved by the viral proteases. Autoprocessing between NS2 and NS3 is mediated by the NS2 cysteine protease catalytic domain and regulated by the NS3 N-terminal domain. In terms of processing, phosphorylated by host PKC and PKA. Ubiquitinated; mediated by UBE3A and leading to core protein subsequent proteasomal degradation. Post-translationally, highly N-glycosylated. In terms of processing, palmitoylation is required for NS2/3 autoprocessing and E2 recruitment to membranes. Palmitoylated. This modification may play a role in its polymerization or in protein-protein interactions. Post-translationally, phosphorylated on serines in a basal form termed p56. p58 is a hyperphosphorylated form of p56. p56 and p58 coexist in the cell in roughly equivalent amounts. Hyperphosphorylation is dependent on the presence of NS4A. Host CSNK1A1/CKI-alpha or RPS6KB1 kinases may be responsible for NS5A phosphorylation. In terms of processing, tyrosine phosphorylation is essential for the interaction with host SRC. Ubiquitinated. Ubiquitination, most probably at Lys-2356, mediated by host IFI27 and SKP2 leads to proteasomal degradation, restricting viral infection. Ubiquitination by host TRIM22 leads to interruption of viral replication. Post-translationally, the N-terminus is phosphorylated by host PRK2/PKN2.

Its subcellular location is the host endoplasmic reticulum membrane. The protein localises to the host mitochondrion membrane. The protein resides in the virion. It is found in the host cytoplasm. It localises to the host nucleus. Its subcellular location is the host lipid droplet. The protein localises to the virion membrane. The protein resides in the host mitochondrion. It is found in the host cell membrane. It localises to the host perinuclear region. It catalyses the reaction Hydrolysis of four peptide bonds in the viral precursor polyprotein, commonly with Asp or Glu in the P6 position, Cys or Thr in P1 and Ser or Ala in P1'.. The catalysed reaction is a ribonucleoside 5'-triphosphate + H2O = a ribonucleoside 5'-diphosphate + phosphate + H(+). It carries out the reaction ATP + H2O = ADP + phosphate + H(+). The enzyme catalyses RNA(n) + a ribonucleoside 5'-triphosphate = RNA(n+1) + diphosphate. With respect to regulation, inhibited by the antiviral drug hexamethylene amiloride. Inhibition by amantadine appears to be genotype-dependent. Also inhibited by long-alkyl-chain iminosugar derivatives. Its activity is regulated as follows. Activity is up-regulated by PRK2/PKN2-mediated phosphorylation. In terms of biological role, packages viral RNA to form a viral nucleocapsid, and promotes virion budding. Participates in the viral particle production as a result of its interaction with the non-structural protein 5A. Binds RNA and may function as a RNA chaperone to induce the RNA structural rearrangements taking place during virus replication. Modulates viral translation initiation by interacting with viral IRES and 40S ribosomal subunit. Affects various cell signaling pathways, host immunity and lipid metabolism. Prevents the establishment of cellular antiviral state by blocking the interferon-alpha/beta (IFN-alpha/beta) and IFN-gamma signaling pathways and by blocking the formation of phosphorylated STAT1 and promoting ubiquitin-mediated proteasome-dependent degradation of STAT1. Activates STAT3 leading to cellular transformation. Regulates the activity of cellular genes, including c-myc and c-fos. May repress the promoter of p53, and sequester CREB3 and SP110 isoform 3/Sp110b in the cytoplasm. Represses cell cycle negative regulating factor CDKN1A, thereby interrupting an important check point of normal cell cycle regulation. Targets transcription factors involved in the regulation of inflammatory responses and in the immune response: suppresses TNF-induced NF-kappa-B activation, and activates AP-1. Binds to dendritic cells (DCs) via C1QR1, resulting in down-regulation of T-lymphocytes proliferation. Alters lipid metabolism by interacting with hepatocellular proteins involved in lipid accumulation and storage. Induces up-regulation of FAS promoter activity, and thereby contributes to the increased triglyceride accumulation in hepatocytes (steatosis). Functionally, forms a heterodimer with envelope glycoprotein E2, which mediates virus attachment to the host cell, virion internalization through clathrin-dependent endocytosis and fusion with host membrane. Fusion with the host cell is most likely mediated by both E1 and E2, through conformational rearrangements of the heterodimer required for fusion rather than a classical class II fusion mechanism. E1/E2 heterodimer binds host apolipoproteins such as APOB and ApoE thereby forming a lipo-viro-particle (LVP). APOE associated to the LVP allows the initial virus attachment to cell surface receptors such as the heparan sulfate proteoglycans (HSPGs), syndecan-1 (SDC1), syndecan-1 (SDC2), the low-density lipoprotein receptor (LDLR) and scavenger receptor class B type I (SCARB1). The cholesterol transfer activity of SCARB1 allows E2 exposure and binding of E2 to SCARB1 and the tetraspanin CD81. E1/E2 heterodimer binding on CD81 activates the epithelial growth factor receptor (EGFR) signaling pathway. Diffusion of the complex E1-E2-EGFR-SCARB1-CD81 to the cell lateral membrane allows further interaction with Claudin 1 (CLDN1) and occludin (OCLN) to finally trigger HCV entry. Forms a heterodimer with envelope glycoprotein E1, which mediates virus attachment to the host cell, virion internalization through clathrin-dependent endocytosis and fusion with host membrane. Fusion with the host cell is most likely mediated by both E1 and E2, through conformational rearrangements of the heterodimer required for fusion rather than a classical class II fusion mechanism. The interaction between envelope glycoprotein E2 and host apolipoprotein E/APOE allows the proper assembly, maturation and infectivity of the viral particles. This interaction is probably promoted via the up-regulation of cellular autophagy by the virus. E1/E2 heterodimer binds host apolipoproteins such as APOB and APOE thereby forming a lipo-viro-particle (LVP). APOE associated to the LVP allows the initial virus attachment to cell surface receptors such as the heparan sulfate proteoglycans (HSPGs), syndecan-1 (SDC1), syndecan-1 (SDC2), the low-density lipoprotein receptor (LDLR) and scavenger receptor class B type I (SCARB1). The cholesterol transfer activity of SCARB1 allows E2 exposure and binding of E2 to SCARB1 and the tetraspanin CD81. E1/E2 heterodimer binding on CD81 activates the epithelial growth factor receptor (EGFR) signaling pathway. Diffusion of the complex E1-E2-EGFR-SCARB1-CD81 to the cell lateral membrane allows further interaction with Claudin 1 (CLDN1) and occludin (OCLN) to finally trigger HCV entry. Inhibits host EIF2AK2/PKR activation, preventing the establishment of an antiviral state. Viral ligand for CD209/DC-SIGN and CLEC4M/DC-SIGNR, which are respectively found on dendritic cells (DCs), and on liver sinusoidal endothelial cells and macrophage-like cells of lymph node sinuses. These interactions allow the capture of circulating HCV particles by these cells and subsequent facilitated transmission to permissive cells such as hepatocytes and lymphocyte subpopulations. The interaction between E2 and host amino acid transporter complex formed by SLC3A2 and SLC7A5/LAT1 may facilitate viral entry into host cell. Its function is as follows. Ion channel protein that acts as a viroporin and plays an essential role in the assembly, envelopment and secretion of viral particles. Regulates the host cell secretory pathway, which induces the intracellular retention of viral glycoproteins and favors assembly of viral particles. Creates a pore in acidic organelles and releases Ca(2+) and H(+) in the cytoplasm of infected cells, leading to a productive viral infection. High levels of cytoplasmic Ca(2+) may trigger membrane trafficking and transport of viral ER-associated proteins to viroplasms, sites of viral genome replication. This ionic imbalance induces the assembly of the inflammasome complex, which triggers the maturation of pro-IL-1beta into IL-1beta through the action of caspase-1. Targets also host mitochondria and induces mitochondrial depolarization. In addition of its role as a viroporin, acts as a lipid raft adhesion factor. In terms of biological role, cysteine protease required for the proteolytic auto-cleavage between the non-structural proteins NS2 and NS3. The N-terminus of NS3 is required for the function of NS2 protease (active region NS2-3). Promotes the initiation of viral particle assembly by mediating the interaction between structural and non-structural proteins. Functionally, displays three enzymatic activities: serine protease with a chymotrypsin-like fold, NTPase and RNA helicase. NS3 serine protease, in association with NS4A, is responsible for the cleavages of NS3-NS4A, NS4A-NS4B, NS4B-NS5A and NS5A-NS5B. The NS3/NS4A complex prevents phosphorylation of host IRF3, thus preventing the establishment of dsRNA induced antiviral state. The NS3/NS4A complex induces host amino acid transporter component SLC3A2, thus contributing to HCV propagation. NS3 RNA helicase binds to RNA and unwinds both dsDNA and dsRNA in the 3' to 5' direction, and likely resolves RNA complicated stable secondary structures in the template strand. Binds a single ATP and catalyzes the unzipping of a single base pair of dsRNA. Inhibits host antiviral proteins TBK1 and IRF3 thereby preventing the establishment of an antiviral state. Cleaves host MAVS/CARDIF thereby preventing the establishment of an antiviral state. Cleaves host TICAM1/TRIF, thereby disrupting TLR3 signaling and preventing the establishment of an antiviral state. Peptide cofactor which forms a non-covalent complex with the N-terminal of NS3 serine protease. The NS3/NS4A complex prevents phosphorylation of host IRF3, thus preventing the establishment of dsRNA induced antiviral state. The NS3/NS4A complex induces host amino acid transporter component SLC3A2, thus contributing to HCV propagation. Its function is as follows. Induces a specific membrane alteration that serves as a scaffold for the virus replication complex. This membrane alteration gives rise to the so-called ER-derived membranous web that contains the replication complex. NS4B self-interaction contributes to its function in membranous web formation. Promotes host TRIF protein degradation in a CASP8-dependent manner thereby inhibiting host TLR3-mediated interferon signaling. Disrupts the interaction between STING and TBK1 contributing to the inhibition of interferon signaling. In terms of biological role, phosphorylated protein that is indispensable for viral replication and assembly. Both hypo- and hyperphosphorylated states are required for the viral life cycle. The hyperphosphorylated form of NS5A is an inhibitor of viral replication. Involved in RNA-binding and especially in binding to the viral genome. Zinc is essential for RNA-binding. Participates in the viral particle production as a result of its interaction with the mature viral core protein. Its interaction with host VAPB may target the viral replication complex to vesicles. Down-regulates viral IRES translation initiation. Mediates interferon resistance, presumably by interacting with and inhibiting host EIF2AK2/PKR. Prevents BIN1-induced apoptosis. Acts as a transcriptional activator of some host genes important for viral replication when localized in the nucleus. Via the interaction with host PACSIN2, modulates lipid droplet formation in order to promote virion assembly. Modulates TNFRSF21/DR6 signaling pathway for viral propagation. Functionally, RNA-dependent RNA polymerase that performs primer-template recognition and RNA synthesis during viral replication. Initiates RNA transcription/replication at a flavin adenine dinucleotide (FAD), resulting in a 5'- FAD cap on viral RNAs. In this way, recognition of viral 5' RNA by host pattern recognition receptors can be bypassed, thereby evading activation of antiviral pathways. This chain is Genome polyprotein, found in Homo sapiens (Human).